We begin with the raw amino-acid sequence, 314 residues long: NAC domain-containing protein 10 (314 aa).

The segment covering 18–39 (VSNTDHPSVQLKDQSQSCVTSR) has biased composition (polar residues). Disordered stretches follow at residues 18 to 48 (VSNT…SAET) and 150 to 182 (YTTG…PVLS). Residues 77–236 (LPAGVKFDPS…EPVLSKVFYQ (160 aa)) form the NAC domain. Basic and acidic residues predominate over residues 160 to 171 (VSTDEEGHETRW). Residues 187-242 (TGFKKILVLYTNYGRQKKPEKTNWVMHQYHLGSSEDEKDGEPVLSKVFYQTQPRQC) mediate DNA binding.

Expressed in protoxylem and elongating interfascicular fiber cells of elongating internodes, developing metaxylem cells and interfascicular fibers of non-elongating internodes and developing secondary xylem of roots.

It localises to the nucleus. Its function is as follows. Transcriptional activator that plays a regulatory role in the development of secondary cell wall fibers. Is a direct target of SND1. The protein is NAC domain-containing protein 10 of Arabidopsis thaliana (Mouse-ear cress).